Here is a 293-residue protein sequence, read N- to C-terminus: 4-diphosphocytidyl-2-C-methyl-D-erythritol kinase (293 aa).

Lys16 is a catalytic residue. An ATP-binding site is contributed by 99 to 109 (PMGAGLGGGSS). Asp141 is a catalytic residue.

It belongs to the GHMP kinase family. IspE subfamily.

The enzyme catalyses 4-CDP-2-C-methyl-D-erythritol + ATP = 4-CDP-2-C-methyl-D-erythritol 2-phosphate + ADP + H(+). It functions in the pathway isoprenoid biosynthesis; isopentenyl diphosphate biosynthesis via DXP pathway; isopentenyl diphosphate from 1-deoxy-D-xylulose 5-phosphate: step 3/6. Functionally, catalyzes the phosphorylation of the position 2 hydroxy group of 4-diphosphocytidyl-2C-methyl-D-erythritol. The chain is 4-diphosphocytidyl-2-C-methyl-D-erythritol kinase from Burkholderia lata (strain ATCC 17760 / DSM 23089 / LMG 22485 / NCIMB 9086 / R18194 / 383).